Consider the following 333-residue polypeptide: MTIAVLGAGSWGTTLAVLLARKEYEVRLWAHRSEFATALEQERENRRYLNGVHFPDSLHIVATLPELIAWAEVIVTAVPAQALRETVRAFRDIPLEGKIVVNVAKGIELGTGMRMSEVLLDELPQLQLSQVVALYGPSHAEEVSKEQPTTVVASSPSRNAAETVQELFHTNRFRVYINTDIIGVEVAGSVKNIIAIAAGISDGLGFGDNAKAAIITRGLAEISRLCTKLGGDAMTLSGLSGIGDLVVTCLSHHSRNRHVGEEIGKGRTLEEIIHSMSMIAEGVHSSKAVYELSRKVGVDMPITRAVYEMLFEAKPAAQAILDLMNRDPRSERD.

NADPH contacts are provided by Ser10, Trp11, His31, Arg32, and Lys105. Lys105, Gly136, and Ser138 together coordinate sn-glycerol 3-phosphate. Ala140 contacts NADPH. Lys191, Asp244, Ser254, Arg255, and Asn256 together coordinate sn-glycerol 3-phosphate. The active-site Proton acceptor is the Lys191. Arg255 is a binding site for NADPH. NADPH contacts are provided by Ile279 and Glu281.

Belongs to the NAD-dependent glycerol-3-phosphate dehydrogenase family.

It is found in the cytoplasm. The enzyme catalyses sn-glycerol 3-phosphate + NAD(+) = dihydroxyacetone phosphate + NADH + H(+). It catalyses the reaction sn-glycerol 3-phosphate + NADP(+) = dihydroxyacetone phosphate + NADPH + H(+). It participates in membrane lipid metabolism; glycerophospholipid metabolism. Functionally, catalyzes the reduction of the glycolytic intermediate dihydroxyacetone phosphate (DHAP) to sn-glycerol 3-phosphate (G3P), the key precursor for phospholipid synthesis. The polypeptide is Glycerol-3-phosphate dehydrogenase [NAD(P)+] (Chlorobium chlorochromatii (strain CaD3)).